The chain runs to 421 residues: NAD-specific glutamate dehydrogenase (421 aa).

Substrate is bound by residues K70 and K94. The active-site Proton donor is the K106. NAD(+) contacts are provided by T191 and N222. S355 lines the substrate pocket.

This sequence belongs to the Glu/Leu/Phe/Val dehydrogenases family. Homohexamer.

The enzyme catalyses L-glutamate + NAD(+) + H2O = 2-oxoglutarate + NH4(+) + NADH + H(+). The protein operates within amino-acid degradation; L-glutamate degradation via hydroxyglutarate pathway; crotonoyl-CoA from L-glutamate: step 1/5. This Peptoniphilus asaccharolyticus (Peptostreptococcus asaccharolyticus) protein is NAD-specific glutamate dehydrogenase.